The sequence spans 308 residues: Methionine synthase (308 aa).

Zn(2+) is bound by residues H201, C203, E224, and C285.

It belongs to the archaeal MetE family. Zn(2+) is required as a cofactor.

The protein operates within amino-acid biosynthesis; L-methionine biosynthesis via de novo pathway. Its function is as follows. Catalyzes the transfer of a methyl group to L-homocysteine resulting in methionine formation. Can use methylcobalamin and methylcobinamide as methyl donors, but methylcobalamin is not considered to be the physiological substrate. This chain is Methionine synthase, found in Methanothermobacter thermautotrophicus (strain ATCC 29096 / DSM 1053 / JCM 10044 / NBRC 100330 / Delta H) (Methanobacterium thermoautotrophicum).